The primary structure comprises 317 residues: Taste receptor type 2 member 7 (317 aa).

Topologically, residues 1-9 (MTDKVQTTL) are extracellular. A helical membrane pass occupies residues 10–30 (LFLAIGEFSVGILGNAFIGLV). Over 31–55 (NCMDWVKKRKIASIDLILTSLAISR) the chain is Cytoplasmic. A helical transmembrane segment spans residues 56-76 (ICLLCVILLDCFMLVLYPDVY). Over 77-94 (ATGKQMRIIDFFWTLTNH) the chain is Extracellular. A helical transmembrane segment spans residues 95–115 (LSIWFATCLSIYYFFKIANFF). Over 116–128 (HPLFLWMKWRIDR) the chain is Cytoplasmic. Residues 129 to 149 (VISWILLGCMVLSVFINLPAT) form a helical membrane-spanning segment. Residues 150–187 (ENLNADFRRCVKAKRKTNLTWSCRVTKAQHASTKLFLN) lie on the Extracellular side of the membrane. An N-linked (GlcNAc...) asparagine glycan is attached at N167. Residues 188 to 208 (LVTLLPFSVCLVSFFLLILSL) traverse the membrane as a helical segment. Residues 209-235 (WRHIRRMQLSATGCRDPSTEAHVRALK) are Cytoplasmic-facing. A helical transmembrane segment spans residues 236 to 256 (AVISFLFLFIAYYLSFLIATS). Topologically, residues 257–266 (SYFIPETELA) are extracellular. The chain crosses the membrane as a helical span at residues 267 to 287 (VIFGEFIALIYPSSHSFILIL). Residues 288–317 (GNNKLRRASLKVLWTVMSILKGRKFQQKQI) lie on the Cytoplasmic side of the membrane.

Belongs to the G-protein coupled receptor T2R family.

It is found in the membrane. In terms of biological role, gustducin-coupled receptor implicated in the perception of bitter compounds in the oral cavity and the gastrointestinal tract. Signals through PLCB2 and the calcium-regulated cation channel TRPM5. This is Taste receptor type 2 member 7 (TAS2R7) from Papio hamadryas (Hamadryas baboon).